The primary structure comprises 138 residues: Ostreolysin A6 (138 aa).

It belongs to the aegerolysin family. As to quaternary structure, monomer.

Has hemolytic activity against bovine erythrocytes at nanomolar concentrations in vitro. Promotes active pleurotolysin B (PlyB)-dependent permeabilization of membranes rich in cholesterol and sphingomyelin. May play an important role in the initial phase of fungal fruiting. The polypeptide is Ostreolysin A6 (OlyA6) (Pleurotus ostreatus (Oyster mushroom)).